Here is a 301-residue protein sequence, read N- to C-terminus: GTPase Era (301 aa).

Residues 4-173 (KAGFVALIGK…LECISKHLIP (170 aa)) enclose the Era-type G domain. The G1 stretch occupies residues 12–19 (GKPNAGKS). 12-19 (GKPNAGKS) is a binding site for GTP. A G2 region spans residues 38 to 42 (NATRK). The tract at residues 64–67 (DTPG) is G3. GTP contacts are provided by residues 64–68 (DTPGL) and 122–125 (SKID). The tract at residues 122 to 125 (SKID) is G4. The segment at 152 to 154 (LSA) is G5. The region spanning 204–280 (LSDEIPYESD…FLNLQVIAQK (77 aa)) is the KH type-2 domain.

Belongs to the TRAFAC class TrmE-Era-EngA-EngB-Septin-like GTPase superfamily. Era GTPase family. In terms of assembly, monomer.

It localises to the cytoplasm. The protein resides in the cell inner membrane. In terms of biological role, an essential GTPase that binds both GDP and GTP, with rapid nucleotide exchange. Plays a role in 16S rRNA processing and 30S ribosomal subunit biogenesis and possibly also in cell cycle regulation and energy metabolism. This Helicobacter pylori (strain HPAG1) protein is GTPase Era.